We begin with the raw amino-acid sequence, 186 residues long: MSEAEYLGGRLLLAMPGMGDPRFDHAVIAMCVHDEHGALGIGVGHVREGITLHGLLEDVGIDPGLAPDMPVLNGGPVETARGFVLHSDDWGGEGSVTVNGLCCLSASLDILRAIAEGRGPSRFVIALGYAGWGGGQLEGEMRRHGWYAAQGRPEILFETPTGRRWTQAWKREGIDPAHLVGQTGSA.

This sequence belongs to the UPF0301 (AlgH) family.

This is UPF0301 protein Saro_0683 from Novosphingobium aromaticivorans (strain ATCC 700278 / DSM 12444 / CCUG 56034 / CIP 105152 / NBRC 16084 / F199).